The sequence spans 273 residues: Type IV secretion system protein PtlF homolog (273 aa).

An N-terminal signal peptide occupies residues 1 to 20 (MMAARMMAAGLAATALSAHA).

It belongs to the TrbG/VirB9 family.

It localises to the cell outer membrane. This Bordetella bronchiseptica (strain ATCC BAA-588 / NCTC 13252 / RB50) (Alcaligenes bronchisepticus) protein is Type IV secretion system protein PtlF homolog (ptlF).